The chain runs to 413 residues: Serine/threonine-protein kinase SSN3 (413 aa).

The region spanning 26–355 (YHIVGFISSG…AQEALEHPYF (330 aa)) is the Protein kinase domain. ATP contacts are provided by residues 32–40 (ISSGTYGRV) and K56. D158 acts as the Proton acceptor in catalysis. Residues 376-385 (RRVTQDDNDI) show a composition bias toward basic and acidic residues. The tract at residues 376–413 (RRVTQDDNDIRSGSLPGTKRSGLPDDSLMGRASKRLKE) is disordered.

This sequence belongs to the protein kinase superfamily. CMGC Ser/Thr protein kinase family. CDC2/CDKX subfamily. In terms of assembly, component of the srb8-11 complex, a regulatory module of the Mediator complex. The cofactor is Mg(2+).

It localises to the nucleus. The catalysed reaction is L-seryl-[protein] + ATP = O-phospho-L-seryl-[protein] + ADP + H(+). The enzyme catalyses L-threonyl-[protein] + ATP = O-phospho-L-threonyl-[protein] + ADP + H(+). It catalyses the reaction [DNA-directed RNA polymerase] + ATP = phospho-[DNA-directed RNA polymerase] + ADP + H(+). Functionally, component of the srb8-11 complex. The srb8-11 complex is a regulatory module of the Mediator complex which is itself involved in regulation of basal and activated RNA polymerase II-dependent transcription. The srb8-11 complex may be involved in the transcriptional repression of a subset of genes regulated by Mediator. It may inhibit the association of the Mediator complex with RNA polymerase II to form the holoenzyme complex. The srb8-11 complex phosphorylates the C-terminal domain (CTD) of the largest subunit of RNA polymerase II. The polypeptide is Serine/threonine-protein kinase SSN3 (ssn3) (Aspergillus oryzae (strain ATCC 42149 / RIB 40) (Yellow koji mold)).